A 318-amino-acid chain; its full sequence is 26 kDa endochitinase 1 (318 aa).

An N-terminal signal peptide occupies residues 1–19 (MRAFVLFAVVAMAATMAVA). The Chitin-binding type-1 domain maps to 20 to 59 (EQCGSQAGGATCPNCLCCSRFGWCGSTPYCGDGCQSQCSG). 7 disulfide bridges follow: C22/C37, C31/C43, C36/C49, C53/C57, C98/C160, C172/C180, and C279/C311. E142 functions as the Proton donor in the catalytic mechanism.

It belongs to the glycosyl hydrolase 19 family. Chitinase class I subfamily.

The enzyme catalyses Random endo-hydrolysis of N-acetyl-beta-D-glucosaminide (1-&gt;4)-beta-linkages in chitin and chitodextrins.. Functionally, defense against chitin-containing fungal pathogens. The chain is 26 kDa endochitinase 1 from Hordeum vulgare (Barley).